The chain runs to 100 residues: Urease subunit gamma (100 aa).

It belongs to the urease gamma subunit family. As to quaternary structure, heterotrimer of UreA (gamma), UreB (beta) and UreC (alpha) subunits. Three heterotrimers associate to form the active enzyme.

The protein resides in the cytoplasm. The enzyme catalyses urea + 2 H2O + H(+) = hydrogencarbonate + 2 NH4(+). It participates in nitrogen metabolism; urea degradation; CO(2) and NH(3) from urea (urease route): step 1/1. This is Urease subunit gamma from Mycobacterium ulcerans (strain Agy99).